The following is a 335-amino-acid chain: MRN complex-interacting protein (335 aa).

2 disordered regions span residues 75-102 (EEAV…PSKP) and 118-194 (QELD…ALST). Serine 100 bears the Phosphoserine mark. The span at 129–142 (TQLSTSAERPSSPA) shows a compositional bias: polar residues. A Nuclear localization signal (NLS) motif is present at residues 145–148 (RKRK). Residues 177 to 194 (STGLFGTEQQGTSPALST) are compositionally biased toward polar residues. Residues 203–230 (FPRWKLPSPVTQVNAPSSKWARFLLAPG) form a necessary for the association with the MRN complex region. A disordered region spans residues 273–335 (RPPQAIHTTT…TTGEDFDDDL (63 aa)). Basic and acidic residues predominate over residues 286–297 (DRPDRKTREQPR).

Belongs to the MRNIP family. In terms of assembly, associates with the MRE11-RAD50-NBN (MRN) damage-sensing complex; this association is constitutive. Interacts with MRE11. Interacts with NBN. Interacts with RAD50. Phosphorylated; phosphorylation is constitutive and occurs in the absence of any DNA-damaging stimulus. Phosphorylation is necessary for its nuclear retention.

Its subcellular location is the nucleus. The protein localises to the nucleoplasm. Functionally, plays a role in the cellular response to DNA damage and the maintenance of genome stability through its association with the MRN damage-sensing complex. Promotes chromatin loading and activity of the MRN complex to facilitate subsequent ATM-mediated DNA damage response signaling and DNA repair. This Mus musculus (Mouse) protein is MRN complex-interacting protein.